The chain runs to 689 residues: Methionine--tRNA ligase (689 aa).

A 'HIGH' region motif is present at residues 19-29; it reads PYPTGDLHIGH. Residues C150, C153, C162, and C166 each coordinate Zn(2+). A 'KMSKS' region motif is present at residues 338-342; that stretch reads GLSTS. T341 lines the ATP pocket. A tRNA-binding domain is found at 591–689; that stretch reads EFQALDLRVG…EDSEPGTKVM (99 aa).

Belongs to the class-I aminoacyl-tRNA synthetase family. MetG type 1 subfamily. Homodimer. Zn(2+) is required as a cofactor.

The protein resides in the cytoplasm. It catalyses the reaction tRNA(Met) + L-methionine + ATP = L-methionyl-tRNA(Met) + AMP + diphosphate. Functionally, is required not only for elongation of protein synthesis but also for the initiation of all mRNA translation through initiator tRNA(fMet) aminoacylation. This Halobacterium salinarum (strain ATCC 700922 / JCM 11081 / NRC-1) (Halobacterium halobium) protein is Methionine--tRNA ligase.